The chain runs to 381 residues: 3-dehydroquinate synthase (381 aa).

NAD(+)-binding positions include 81–86 (EGEVSK), 115–119 (GVVGD), 139–140 (TS), K152, and K161. 3 residues coordinate Zn(2+): E194, H256, and H274.

This sequence belongs to the sugar phosphate cyclases superfamily. Dehydroquinate synthase family. Co(2+) is required as a cofactor. It depends on Zn(2+) as a cofactor. The cofactor is NAD(+).

The protein resides in the cytoplasm. The catalysed reaction is 7-phospho-2-dehydro-3-deoxy-D-arabino-heptonate = 3-dehydroquinate + phosphate. Its pathway is metabolic intermediate biosynthesis; chorismate biosynthesis; chorismate from D-erythrose 4-phosphate and phosphoenolpyruvate: step 2/7. In terms of biological role, catalyzes the conversion of 3-deoxy-D-arabino-heptulosonate 7-phosphate (DAHP) to dehydroquinate (DHQ). This is 3-dehydroquinate synthase from Rhodopseudomonas palustris (strain BisA53).